Reading from the N-terminus, the 1101-residue chain is Rho GTPase-activating protein 30 (1101 aa).

A Rho-GAP domain is found at 20 to 215 (CDLQEHLQHS…FILTHVDQLF (196 aa)). Disordered regions lie at residues 224-243 (EVES…SPED), 300-400 (HETK…RAGG), and 451-529 (ALQH…AEDG). The segment covering 308-318 (RGAEDREDKSN) has biased composition (basic and acidic residues). Acidic residues predominate over residues 360–376 (LENDSIEAAEGEQEPEA). Over residues 459 to 472 (ASGPGPGPGLGPGP) the composition is skewed to pro residues. Residues 508 to 520 (DSFSFLEDSSSSE) are compositionally biased toward low complexity. Ser-576 carries the post-translational modification Phosphoserine. 2 disordered regions span residues 621–906 (GPKP…QPSP) and 965–991 (CPRP…SWRN). Basic and acidic residues-rich tracts occupy residues 658–694 (GEDK…DRGE), 701–735 (TKVR…KGVE), 759–770 (EEAQVEAGRDLE), and 779–822 (AEEK…DSRS). The segment covering 976–991 (GERAWGSRASRSSWRN) has biased composition (low complexity). Position 996 is a phosphoserine (Ser-996). A disordered region spans residues 1050-1101 (LELPSEGAEGSGSRSRLSLPPREPQVPDPLLSSQRRSYAFETQANPGKGEGL). Positions 1053 to 1069 (PSEGAEGSGSRSRLSLP) are enriched in low complexity. Residues 1080-1094 (LSSQRRSYAFETQAN) are compositionally biased toward polar residues.

In terms of assembly, interacts with RHOU in a GTP-independent manner.

The protein resides in the cytoplasmic vesicle. Its function is as follows. GTPase-activating protein (GAP) for RAC1 and RHOA, but not for CDC42. The polypeptide is Rho GTPase-activating protein 30 (ARHGAP30) (Homo sapiens (Human)).